Consider the following 604-residue polypeptide: Sulfite reductase [NADPH] flavoprotein alpha-component (604 aa).

A Flavodoxin-like domain is found at 66–204 (VTVLSASQTG…SANAWTDNIA (139 aa)). Residues 72–77 (SQTGNA), 119–122 (STQG), and 155–164 (LGDSSYPNFC) contribute to the FMN site. The 215-residue stretch at 239-453 (AAPFPAALLA…VERNDGFRLP (215 aa)) folds into the FAD-binding FR-type domain. Residues T327, Q361, 391 to 394 (RLYS), 409 to 411 (TVG), and 424 to 427 (GGAS) contribute to the FAD site. NADP(+) contacts are provided by residues 524 to 525 (SR), 530 to 534 (KIYVQ), and D566. Position 604 (Y604) interacts with FAD.

This sequence belongs to the NADPH-dependent sulphite reductase flavoprotein subunit CysJ family. It in the N-terminal section; belongs to the flavodoxin family. The protein in the C-terminal section; belongs to the flavoprotein pyridine nucleotide cytochrome reductase family. Alpha(8)-beta(8). The alpha component is a flavoprotein, the beta component is a hemoprotein. Requires FAD as cofactor. The cofactor is FMN.

It catalyses the reaction hydrogen sulfide + 3 NADP(+) + 3 H2O = sulfite + 3 NADPH + 4 H(+). It participates in sulfur metabolism; hydrogen sulfide biosynthesis; hydrogen sulfide from sulfite (NADPH route): step 1/1. In terms of biological role, component of the sulfite reductase complex that catalyzes the 6-electron reduction of sulfite to sulfide. This is one of several activities required for the biosynthesis of L-cysteine from sulfate. The flavoprotein component catalyzes the electron flow from NADPH -&gt; FAD -&gt; FMN to the hemoprotein component. This is Sulfite reductase [NADPH] flavoprotein alpha-component from Neisseria meningitidis serogroup B (strain ATCC BAA-335 / MC58).